The primary structure comprises 182 residues: Rhodanese-like domain-containing protein 15, chloroplastic (182 aa).

Residues 1-65 (METTAFNTTS…TTSRGNVAAE (65 aa)) constitute a chloroplast transit peptide. Residues 82–182 (AQAGYRYLDV…WTENELPVEE (101 aa)) form the Rhodanese domain. Cysteine 142 acts as the Cysteine persulfide intermediate in catalysis.

It localises to the plastid. Its subcellular location is the chloroplast. The protein resides in the thylakoid. The chain is Rhodanese-like domain-containing protein 15, chloroplastic (STR15) from Arabidopsis thaliana (Mouse-ear cress).